The sequence spans 602 residues: Glutaminase liver isoform, mitochondrial (602 aa).

A mitochondrion-targeting transit peptide spans 1–14; sequence MRSMRALQNALSRA. Disordered regions lie at residues 1-28 and 46-67; these read MRSM…HPSR and QGRG…SNSG. Residue serine 219 coordinates substrate. Lysine 253 carries the N6-succinyllysine modification. Asparagine 268 is a binding site for substrate. Residues lysine 279 and lysine 284 each carry the N6-acetyllysine modification. Positions 314 and 321 each coordinate substrate. Lysine 329 is modified (N6-acetyllysine). Substrate contacts are provided by tyrosine 347, tyrosine 399, and valine 417. ANK repeat units lie at residues 518 to 551 and 552 to 585; these read DSRT…VKDR and WGNI…SETQ.

It belongs to the glutaminase family. In terms of assembly, homotetramer, dimer of dimers. Does not assemble into higher oligomers. Interacts with the PDZ domain of the syntrophin SNTA1. Interacts with the PDZ domain of TAX1BP3. As to expression, liver specific.

The protein resides in the mitochondrion. It carries out the reaction L-glutamine + H2O = L-glutamate + NH4(+). Functionally, plays an important role in the regulation of glutamine catabolism. Promotes mitochondrial respiration and increases ATP generation in cells by catalyzing the synthesis of glutamate and alpha-ketoglutarate. Increases cellular anti-oxidant function via NADH and glutathione production. May play a role in preventing tumor proliferation. The polypeptide is Glutaminase liver isoform, mitochondrial (Gls2) (Rattus norvegicus (Rat)).